We begin with the raw amino-acid sequence, 20 residues long: Thylakoid lumenal 18.4 kDa protein (20 aa).

The protein resides in the plastid. It localises to the chloroplast thylakoid lumen. The polypeptide is Thylakoid lumenal 18.4 kDa protein (Spinacia oleracea (Spinach)).